A 339-amino-acid chain; its full sequence is Fructose-1,6-bisphosphatase class 1 (339 aa).

Residues glutamate 94, aspartate 116, leucine 118, and aspartate 119 each coordinate Mg(2+). Substrate contacts are provided by residues 119–122 (DGSS), asparagine 210, and lysine 276. Glutamate 282 lines the Mg(2+) pocket.

The protein belongs to the FBPase class 1 family. As to quaternary structure, homotetramer. Requires Mg(2+) as cofactor.

The protein localises to the cytoplasm. It catalyses the reaction beta-D-fructose 1,6-bisphosphate + H2O = beta-D-fructose 6-phosphate + phosphate. The protein operates within carbohydrate biosynthesis; gluconeogenesis. The polypeptide is Fructose-1,6-bisphosphatase class 1 (Burkholderia ambifaria (strain ATCC BAA-244 / DSM 16087 / CCUG 44356 / LMG 19182 / AMMD) (Burkholderia cepacia (strain AMMD))).